Reading from the N-terminus, the 213-residue chain is Transcription antitermination protein NusB (213 aa).

This sequence belongs to the NusB family.

In terms of biological role, involved in transcription antitermination. Required for transcription of ribosomal RNA (rRNA) genes. Binds specifically to the boxA antiterminator sequence of the ribosomal RNA (rrn) operons. In Nostoc punctiforme (strain ATCC 29133 / PCC 73102), this protein is Transcription antitermination protein NusB.